A 285-amino-acid polypeptide reads, in one-letter code: Pantothenate synthetase (285 aa).

Position 30–37 (30–37 (MGFLHEGH)) interacts with ATP. The active-site Proton donor is the His37. Gln61 provides a ligand contact to (R)-pantoate. Gln61 contributes to the beta-alanine binding site. An ATP-binding site is contributed by 147 to 150 (GQKD). Residue Gln153 participates in (R)-pantoate binding. ATP contacts are provided by residues Val176 and 184–187 (KSSR).

This sequence belongs to the pantothenate synthetase family. In terms of assembly, homodimer.

The protein resides in the cytoplasm. The catalysed reaction is (R)-pantoate + beta-alanine + ATP = (R)-pantothenate + AMP + diphosphate + H(+). The protein operates within cofactor biosynthesis; (R)-pantothenate biosynthesis; (R)-pantothenate from (R)-pantoate and beta-alanine: step 1/1. Its function is as follows. Catalyzes the condensation of pantoate with beta-alanine in an ATP-dependent reaction via a pantoyl-adenylate intermediate. In Listeria innocua serovar 6a (strain ATCC BAA-680 / CLIP 11262), this protein is Pantothenate synthetase.